The chain runs to 265 residues: Probable DNA replication complex GINS protein PSF3 (265 aa).

Residues 180 to 265 (ISTSSNNKNN…KKRKRMFDDE (86 aa)) form a disordered region. The span at 183-246 (SSNNKNNSSN…NNNNNSQNSS (64 aa)) shows a compositional bias: low complexity. The span at 255-265 (VKKRKRMFDDE) shows a compositional bias: basic residues.

It belongs to the GINS3/PSF3 family. In terms of assembly, component of the GINS complex which is a heterotetramer of gins1, gins2, gins3 and gins4.

It localises to the nucleus. Its function is as follows. The GINS complex plays an essential role in the initiation of DNA replication. The sequence is that of Probable DNA replication complex GINS protein PSF3 (gins3) from Dictyostelium discoideum (Social amoeba).